Consider the following 86-residue polypeptide: High affinity immunoglobulin epsilon receptor subunit gamma (86 aa).

A signal peptide spans 1-18 (MIPAVILFLLLLVEEAAA). The Extracellular segment spans residues 19 to 23 (LGEPQ). The chain crosses the membrane as a helical span at residues 24–44 (LCYILDAILFLYGIVLTLLYC). Residues 45-86 (RLKIQVRKADIASREKSDAVYTGLNTRNQETYETLKHEKPPQ) are Cytoplasmic-facing. The ITAM domain occupies 54 to 82 (DIASREKSDAVYTGLNTRNQETYETLKHE). A phosphotyrosine mark is found at Y65 and Y76. Phosphothreonine is present on T78.

The protein belongs to the CD3Z/FCER1G family. IgE Fc receptor is a tetramer of an alpha chain, a beta chain, and two disulfide linked gamma chains. Associates with FCGR1A to form a functional receptor complex. The signaling subunit of immunoglobulin gamma (IgG) Fc receptor complex. As a homodimer or a heterodimer of CD247 and FCER1G, associates with the ligand binding subunit FCGR3A to form a functional receptor complex. Associates with CLEC6A. Interacts with CLEC4E. Interacts (via ITAM domain) with SYK (via SH2 domains); activates SYK, enabling integrin-mediated activation of neutrophils and macrophages. Interacts with common beta chain of interleukin 3 receptor CSF2RB and recruits SYK in response to IL3 stimulation; this interaction is direct. Interacts with CD300LH; the interaction may be indirect. Interacts with CD300LD. Interacts with TARM1. As to expression, expressed in leukocytes and pinealocytes. Expression in the pineal gland does not undergo circadian variations.

The protein localises to the cell membrane. Functionally, adapter protein containing an immunoreceptor tyrosine-based activation motif (ITAM) that transduces activation signals from various immunoreceptors. As a component of the high-affinity immunoglobulin E (IgE) receptor, mediates allergic inflammatory signaling in mast cells. As a constitutive component of interleukin-3 receptor complex, selectively mediates interleukin 4/IL4 production by basophils priming T-cells toward effector T-helper 2 subset. Associates with pattern recognition receptors CLEC4D and CLEC4E to form a functional signaling complex in myeloid cells. Binding of mycobacterial trehalose 6,6'-dimycolate (TDM) to this receptor complex leads to phosphorylation of ITAM, triggering activation of SYK, CARD9 and NF-kappa-B, consequently driving maturation of antigen-presenting cells and shaping antigen-specific priming of T-cells toward effector T-helper 1 and T-helper 17 cell subtypes. May function cooperatively with other activating receptors. Functionally linked to integrin beta-2/ITGB2-mediated neutrophil activation. Also involved in integrin alpha-2/ITGA2-mediated platelet activation. The chain is High affinity immunoglobulin epsilon receptor subunit gamma (Fcer1g) from Rattus norvegicus (Rat).